The sequence spans 127 residues: Small ribosomal subunit protein bS16 (127 aa).

Residues 80 to 127 are disordered; that stretch reads GLKKRPTRNNPHKGEPGKKAQERIAAAKQAAEEAAAAKTESAPISEEV. Residues 81–90 show a composition bias toward basic residues; that stretch reads LKKRPTRNNP. Over residues 91 to 101 the composition is skewed to basic and acidic residues; sequence HKGEPGKKAQE. The span at 102–121 shows a compositional bias: low complexity; sequence RIAAAKQAAEEAAAAKTESA.

This sequence belongs to the bacterial ribosomal protein bS16 family.

The protein is Small ribosomal subunit protein bS16 of Bartonella henselae (strain ATCC 49882 / DSM 28221 / CCUG 30454 / Houston 1) (Rochalimaea henselae).